Here is a 130-residue protein sequence, read N- to C-terminus: Encapsulin nanocompartment cargo protein EncC (130 aa).

Positions 31, 61, and 64 each coordinate Fe cation. Residues 61–64 (EREH) carry the Di-iron-binding motif motif. Positions 103-130 (EAVGKEGAAPSPADVTPEKRLTVGSLRR) are disordered. The segment at 123–130 (LTVGSLRR) is probable targeting peptide.

This sequence belongs to the ferritin-like superfamily.

It is found in the encapsulin nanocompartment. Functionally, cargo protein of a type 1 encapsulin nanocompartment. May help nucleate Fe atoms in the interior of the encapsulin nanocompartment. Present in about 92 copies/encapsulin nanocompartment. In Myxococcus xanthus (strain DK1622), this protein is Encapsulin nanocompartment cargo protein EncC.